Reading from the N-terminus, the 1148-residue chain is Protocadherin-19 (1148 aa).

An N-terminal signal peptide occupies residues 1 to 21; sequence MESLLLPVLLLLAILWTQAAA. 6 Cadherin domains span residues 22–129, 130–238, 239–346, 350–453, 454–563, and 569–672; these read LINL…APSF, PAAQ…NPVF, SEST…PPVI, SVNS…HPHF, SKPY…TPVI, and INGT…QESM. Topologically, residues 22–678 are extracellular; that stretch reads LINLKYSVEE…QESMGSVNLS (657 aa). Ca(2+)-binding residues include Glu-31, Glu-32, Asp-88, and Asp-90. Residues Cys-93 and Cys-99 are joined by a disulfide bond. Residues Asp-121, Asn-123, Asp-124, Asn-125, Glu-140, Asp-155, Asp-157, Glu-199, Asp-212, Asp-230, Ser-231, Asn-232, Asp-233, Asn-234, and Glu-249 each contribute to the Ca(2+) site. N-linked (GlcNAc...) asparagine glycosylation occurs at Asn-261. Residues Asp-264, Asp-266, Asn-270, Asp-305, Glu-307, Asp-338, Asn-340, Asp-341, Asn-342, Glu-360, Asp-375, Asp-377, Asn-381, Asp-412, and Glu-414 each contribute to the Ca(2+) site. Asn-420 carries an N-linked (GlcNAc...) asparagine glycan. 13 residues coordinate Ca(2+): Asp-427, Asp-445, Glu-446, Asn-447, Asp-448, Asn-449, Glu-464, Asp-479, Asp-481, Asn-485, Asn-522, Glu-524, and Asp-537. Asn-485 carries N-linked (GlcNAc...) asparagine glycosylation. N-linked (GlcNAc...) asparagine glycosylation is present at Asn-546. Ca(2+) is bound by residues Asp-555, Val-556, Asn-557, Asp-558, and Asn-559. N-linked (GlcNAc...) asparagine glycosylation occurs at Asn-570. Ca(2+) contacts are provided by Asp-594, Asp-596, Asn-600, and Asp-646. Residue Asn-676 is glycosylated (N-linked (GlcNAc...) asparagine). Residues 679-699 traverse the membrane as a helical segment; it reads LIFIIALGSIAGILFVTMIFV. At 700–1148 the chain is on the cytoplasmic side; the sequence is AIKCKRDNKE…GVKRLKDIVL (449 aa). Disordered stretches follow at residues 901–921 and 1100–1148; these read GNSL…EHDV and NVNN…DIVL. Basic and acidic residues-rich tracts occupy residues 906–921, 1109–1123, and 1130–1148; these read DSGH…EHDV, SEAE…KVMH, and KEGR…DIVL.

Homodimer; antiparallel. In terms of tissue distribution, moderately expressed in all regions of the brain examined, with lowest levels found in the cerebellum. Moderate expression is also found in ovary, and low expression in all other tissues tested. Also detected in primary skin fibroblast.

It localises to the cell membrane. Functionally, calcium-dependent cell-adhesion protein. The chain is Protocadherin-19 (PCDH19) from Homo sapiens (Human).